A 65-amino-acid polypeptide reads, in one-letter code: Conotoxin VnMLCL-041 (65 aa).

An N-terminal signal peptide occupies residues 1–19 (MLCLPVFIILLLLASPAAP). Residues 20–43 (NPLQTRIQSNLIRAGPEDANIKTD) constitute a propeptide that is removed on maturation. Lysine 64 bears the Lysine amide mark.

This sequence belongs to the conotoxin T superfamily. In terms of tissue distribution, expressed by the venom duct.

The protein localises to the secreted. The chain is Conotoxin VnMLCL-041 from Conus ventricosus (Mediterranean cone).